The chain runs to 168 residues: Heat shock protein beta-9 (168 aa).

Polar residues predominate over residues 1–12 (MQRVGSSFSTGQ). Disordered regions lie at residues 1–25 (MQRVGSSFSTGQREPGENRVASRCP), 83–104 (TGQRQHESNDPSRGRYRMEQSV), and 129–168 (LWLRGQNKCLPPPEAQTGQSQKPRRGGPKSSLQNESVKNP). Residues 38-151 (LPVRLLRDEV…EAQTGQSQKP (114 aa)) form the sHSP domain. The span at 86–104 (RQHESNDPSRGRYRMEQSV) shows a compositional bias: basic and acidic residues. The segment covering 158-168 (SSLQNESVKNP) has biased composition (polar residues).

It belongs to the small heat shock protein (HSP20) family. As to expression, testis specific.

It is found in the cytoplasm. It localises to the nucleus. The protein is Heat shock protein beta-9 (Hspb9) of Mus musculus (Mouse).